The sequence spans 127 residues: Large ribosomal subunit protein bL17 (127 aa).

This sequence belongs to the bacterial ribosomal protein bL17 family. Part of the 50S ribosomal subunit. Contacts protein L32.

The polypeptide is Large ribosomal subunit protein bL17 (Pediococcus pentosaceus (strain ATCC 25745 / CCUG 21536 / LMG 10740 / 183-1w)).